Consider the following 155-residue polypeptide: 6,7-dimethyl-8-ribityllumazine synthase (155 aa).

Residues phenylalanine 18, 49 to 51, and 75 to 77 contribute to the 5-amino-6-(D-ribitylamino)uracil site; these read ALE and CVI. A (2S)-2-hydroxy-3-oxobutyl phosphate-binding site is contributed by 80–81; the sequence is ET. The Proton donor role is filled by histidine 83. Asparagine 108 serves as a coordination point for 5-amino-6-(D-ribitylamino)uracil. Arginine 122 is a binding site for (2S)-2-hydroxy-3-oxobutyl phosphate.

The protein belongs to the DMRL synthase family.

It carries out the reaction (2S)-2-hydroxy-3-oxobutyl phosphate + 5-amino-6-(D-ribitylamino)uracil = 6,7-dimethyl-8-(1-D-ribityl)lumazine + phosphate + 2 H2O + H(+). It participates in cofactor biosynthesis; riboflavin biosynthesis; riboflavin from 2-hydroxy-3-oxobutyl phosphate and 5-amino-6-(D-ribitylamino)uracil: step 1/2. In terms of biological role, catalyzes the formation of 6,7-dimethyl-8-ribityllumazine by condensation of 5-amino-6-(D-ribitylamino)uracil with 3,4-dihydroxy-2-butanone 4-phosphate. This is the penultimate step in the biosynthesis of riboflavin. The chain is 6,7-dimethyl-8-ribityllumazine synthase from Bartonella henselae (strain ATCC 49882 / DSM 28221 / CCUG 30454 / Houston 1) (Rochalimaea henselae).